We begin with the raw amino-acid sequence, 421 residues long: FAD-dependent monooxygenase atnJ (421 aa).

A helical membrane pass occupies residues 9 to 29 (LVPLHVVIVGAGIGGLSAAVA). FAD-binding residues include Glu41 and Ala54. Arg188 is a catalytic residue. FAD contacts are provided by Asp303 and Val316. A disordered region spans residues 371 to 392 (RDGDAQAARDSQRKATSGTGQN).

It belongs to the paxM FAD-dependent monooxygenase family. The cofactor is FAD.

The protein resides in the membrane. It participates in secondary metabolite biosynthesis; terpenoid biosynthesis. Functionally, FAD-dependent monooxygenase; part of the gene cluster that mediates the biosynthesis of the meroterpenoids arthripenoids. The pathway begins with the HR-PKS atnH that catalyzes two chain-extension steps to form a reduced triketide, which then primes the SAT domain in the NR-PKS atnG to initiate three more cycles of extension to give a linear hexaketide corresponding to the polyketide part of arthripenoids. The FAD-dependent monooxygenase atnJ then performs an oxidative decarboxylation at C11 of the atnH/atnG product, via an electrophilic aromatic hydroxylation with concomitant ipso-decarboxylation. The membrane-bound polyprenyl transferase atnF then introduces a farnesyl group before the FAD-dependent monooxygenase atnK functions as the first epoxidase on terminal C12'-C13' olefin, followed by a second epoxidation on C7'-C8' catalyzed by atnA. The terpene cyclase/mutase atnI then initiates the sequential tricyclic ring formation through protonation of the terminal epoxide and catalyzes the regioselective and stereoselective 6/6/6-tricyclic ring formation. The cytochrome P450 monooxygenase atnM is responsible for hydroxylating both C1' and C10'. The next steps may involve ketoreduction and acetyl transfer by the ketoreductase atnB and the acetyltransferase atnC, and lead to the production of arthripenoid B, the final biosynthetic product of the atn cluster. The hydroquinone moiety in arthripenoid B is prone to undergo spontaneous oxidation to afford a benzoquinone compound, a key intermediate for generating structure diversity. For instance, addition of a cysteine followed by ring contraction gives arthripenoid A, tautomerization gives the main product arthripenoid C, addition of a molecular of water or amine affords arthripenoid D or E, respectively, and loss of one water forms arthripenoid F. This Arthrinium sp protein is FAD-dependent monooxygenase atnJ.